A 142-amino-acid polypeptide reads, in one-letter code: Aspartate 1-decarboxylase (142 aa).

S25 serves as the catalytic Schiff-base intermediate with substrate; via pyruvic acid. S25 carries the pyruvic acid (Ser) modification. Residue T57 coordinates substrate. Y58 (proton donor) is an active-site residue. G73–A75 provides a ligand contact to substrate.

Belongs to the PanD family. In terms of assembly, heterooctamer of four alpha and four beta subunits. Requires pyruvate as cofactor. Post-translationally, is synthesized initially as an inactive proenzyme, which is activated by self-cleavage at a specific serine bond to produce a beta-subunit with a hydroxyl group at its C-terminus and an alpha-subunit with a pyruvoyl group at its N-terminus.

It is found in the cytoplasm. It catalyses the reaction L-aspartate + H(+) = beta-alanine + CO2. It functions in the pathway cofactor biosynthesis; (R)-pantothenate biosynthesis; beta-alanine from L-aspartate: step 1/1. Functionally, catalyzes the pyruvoyl-dependent decarboxylation of aspartate to produce beta-alanine. This is Aspartate 1-decarboxylase from Mycobacterium leprae (strain Br4923).